Consider the following 185-residue polypeptide: Ribosome-recycling factor (185 aa).

Belongs to the RRF family.

The protein resides in the cytoplasm. Functionally, responsible for the release of ribosomes from messenger RNA at the termination of protein biosynthesis. May increase the efficiency of translation by recycling ribosomes from one round of translation to another. The chain is Ribosome-recycling factor from Corynebacterium diphtheriae (strain ATCC 700971 / NCTC 13129 / Biotype gravis).